Reading from the N-terminus, the 1480-residue chain is Cystic fibrosis transmembrane conductance regulator (1480 aa).

Over methionine 1 to phenylalanine 77 the chain is Cytoplasmic. Residues phenylalanine 78–glutamine 98 traverse the membrane as a helical segment. An ABC transmembrane type-1 1 domain is found at phenylalanine 81 to leucine 365. The Extracellular portion of the chain corresponds to proline 99–tyrosine 122. The helical transmembrane segment at leucine 123–histidine 146 threads the bilayer. Residues histidine 147–leucine 195 are Cytoplasmic-facing. The helical transmembrane segment at alanine 196 to tryptophan 216 threads the bilayer. The Extracellular portion of the chain corresponds to glutamate 217–serine 222. The helical transmembrane segment at alanine 223 to methionine 243 threads the bilayer. Topologically, residues methionine 244–lysine 298 are cytoplasmic. A helical membrane pass occupies residues alanine 299 to phenylalanine 319. The Extracellular segment spans residues leucine 320–threonine 339. The chain crosses the membrane as a helical span at residues isoleucine 340 to valine 358. Residues glutamine 359 to serine 858 lie on the Cytoplasmic side of the membrane. ATP contacts are provided by residues tryptophan 401, serine 434, glycine 458 to threonine 465, and glutamine 493. An ABC transporter 1 domain is found at asparagine 423–glycine 646. Residue cysteine 524 is the site of S-palmitoyl cysteine attachment. Phosphoserine is present on residues serine 549 and serine 660. The disordered R region stretch occupies residues serine 654–glutamate 831. The residue at position 670 (serine 670) is a Phosphoserine; by PKA. Serine 686 is modified (phosphoserine). A Glycyl lysine isopeptide (Lys-Gly) (interchain with G-Cter in ubiquitin) cross-link involves residue lysine 688. Phosphoserine occurs at positions 700 and 712. Residue threonine 717 is modified to Phosphothreonine. Phosphoserine is present on residues serine 737, serine 753, serine 768, serine 790, serine 795, and serine 813. The chain crosses the membrane as a helical span at residues leucine 859 to valine 879. The ABC transmembrane type-1 2 domain maps to leucine 859–serine 1155. The Extracellular portion of the chain corresponds to valine 880–isoleucine 918. 3 N-linked (GlcNAc...) asparagine glycosylation sites follow: asparagine 894, asparagine 900, and asparagine 909. Residues tyrosine 919–histidine 939 traverse the membrane as a discontinuously helical segment. Residues threonine 940–threonine 990 are Cytoplasmic-facing. A helical transmembrane segment spans residues isoleucine 991 to leucine 1011. The Extracellular portion of the chain corresponds to glutamine 1012 to proline 1013. Residues tyrosine 1014–leucine 1034 form a helical membrane-spanning segment. The Cytoplasmic portion of the chain corresponds to glutamine 1035–threonine 1095. Residues leucine 1096–phenylalanine 1116 traverse the membrane as a helical segment. Residues isoleucine 1117–glycine 1130 are Extracellular-facing. The helical transmembrane segment at isoleucine 1131–isoleucine 1151 threads the bilayer. Residues aspartate 1152–leucine 1480 are Cytoplasmic-facing. The ABC transporter 2 domain occupies methionine 1210–histidine 1443. ATP is bound by residues tyrosine 1219 and glycine 1244–serine 1251. The tract at residues arginine 1386 to leucine 1480 is interaction with GORASP2. Cysteine 1395 is lipidated: S-palmitoyl cysteine. Phosphoserine is present on residues serine 1444 and serine 1456. The disordered stretch occupies residues histidine 1452–leucine 1480. Over residues glutamate 1470–leucine 1480 the composition is skewed to acidic residues. Positions threonine 1478–leucine 1480 match the PDZ-binding motif.

The protein belongs to the ABC transporter superfamily. ABCC family. CFTR transporter (TC 3.A.1.202) subfamily. As to quaternary structure, monomer; does not require oligomerization for channel activity. May form oligomers in the membrane. Interacts with SLC26A3, SLC26A6 and NHERF1. Interacts with SHANK2. Interacts with MYO6. Interacts (via C-terminus) with GOPC (via PDZ domain); this promotes CFTR internalization and thereby decreases channel activity. Interacts with SLC4A7 through NHERF1. Found in a complex with MYO5B and RAB11A. Interacts with ANO1. Interacts with SLC26A8. Interacts with AHCYL1; the interaction increases CFTR activity. Interacts with CSE1L. The core-glycosylated form interacts with GORASP2 (via PDZ GRASP-type 1 domain) in respone to ER stress. Interacts with MARCHF2; the interaction leads to CFTR ubiqtuitination and degradation. Interacts with ADGRG2. Post-translationally, N-glycosylated. Phosphorylated; cAMP treatment promotes phosphorylation and activates the channel. Dephosphorylation decreases the ATPase activity (in vitro). Phosphorylation at PKA sites activates the channel. Phosphorylation at PKC sites enhances the response to phosphorylation by PKA. Phosphorylated by AMPK; this inhibits channel activity. In terms of processing, ubiquitinated, leading to its degradation in the lysosome. Deubiquitination by USP10 in early endosomes enhances its endocytic recycling to the cell membrane. Ubiquitinated by RNF185 during ER stress. Ubiquitinated by MARCHF2.

The protein localises to the apical cell membrane. Its subcellular location is the early endosome membrane. The protein resides in the cell membrane. It localises to the recycling endosome membrane. It is found in the endoplasmic reticulum membrane. The protein localises to the nucleus. The enzyme catalyses ATP + H2O + closed Cl(-) channel = ADP + phosphate + open Cl(-) channel.. It carries out the reaction chloride(in) = chloride(out). It catalyses the reaction hydrogencarbonate(in) = hydrogencarbonate(out). The catalysed reaction is ATP + H2O = ADP + phosphate + H(+). In terms of biological role, epithelial ion channel that plays an important role in the regulation of epithelial ion and water transport and fluid homeostasis. Mediates the transport of chloride ions across the cell membrane. Possesses an intrinsic ATPase activity and utilizes ATP to gate its channel; the passive flow of anions through the channel is gated by cycles of ATP binding and hydrolysis by the ATP-binding domains. The ion channel is also permeable to HCO(3)(-); selectivity depends on the extracellular chloride concentration. Exerts its function also by modulating the activity of other ion channels and transporters. Contributes to the regulation of the pH and the ion content of the epithelial fluid layer. Modulates the activity of the epithelial sodium channel (ENaC) complex, in part by regulating the cell surface expression of the ENaC complex. May regulate bicarbonate secretion and salvage in epithelial cells by regulating the transporter SLC4A7. Can inhibit the chloride channel activity of ANO1. Plays a role in the chloride and bicarbonate homeostasis during sperm epididymal maturation and capacitation. The chain is Cystic fibrosis transmembrane conductance regulator from Ateles geoffroyi (Black-handed spider monkey).